The primary structure comprises 82 residues: Envelope small membrane protein (82 aa).

The Virion surface segment spans residues 1–16; the sequence is MLPFVHEQIGTIIVNF. Residues 17 to 37 form a helical membrane-spanning segment; sequence FILTVVCAITLVVCLAILTAI. The Intravirion portion of the chain corresponds to 38-78; that stretch reads RLCVQCASGVNTLLFVPAFYIYNTGRNAYFKFQENRPPFPP.

It belongs to the betacoronaviruses E protein family. In terms of assembly, homopentamer. Interacts with membrane protein M in the budding compartment of the host cell, which is located between endoplasmic reticulum and the Golgi complex. Interacts with Nucleoprotein.

It localises to the host Golgi apparatus membrane. Functionally, plays a central role in virus morphogenesis and assembly. Acts as a viroporin and self-assembles in host membranes forming pentameric protein-lipid pores that allow ion transport. Also plays a role in the induction of apoptosis. The polypeptide is Envelope small membrane protein (Tylonycteris pachypus (Lesser bamboo bat)).